The sequence spans 544 residues: E3 ubiquitin-protein ligase makorin-3 (544 aa).

Disordered stretches follow at residues 1 to 46 and 117 to 144; these read MEES…VSSA and DLSGRRRSRGGQDAQPRASADRGPKMAT. Low complexity-rich tracts occupy residues 9–19 and 36–46; these read EAHAAAGAEAG and AAGASAGVSSA. 2 consecutive C3H1-type zinc fingers follow at residues 92–119 and 274–301; these read WTKQILCRYYLHGQCKEGDNCRYSHDLS and PMPLPLCRYAARGQCLRGDRCAYPHGEI. The segment at 302–329 is makorin-type Cys-His; it reads CDMCGQQALHPWDAAQQEAHRRACVEAH. The segment at 347–401 adopts an RING-type zinc-finger fold; the sequence is CGICMEVVYEKADPSDRRFGILFSCNHTYCLRCIRRWRSATQFENRISKSCPQCR. A C3H1-type 3 zinc finger spans residues 430 to 459; sequence GMSQKACRYFAGGLGHCPFGEFCFYKHEYP.

As to expression, mainly expressed in mouse brain and reproductive system including testis and ovary. Ubiquitously detected at low levels throughout the entire embryo, but expression is highest in the ventricular layers of the brain.

Its subcellular location is the nucleus. It catalyses the reaction S-ubiquitinyl-[E2 ubiquitin-conjugating enzyme]-L-cysteine + [acceptor protein]-L-lysine = [E2 ubiquitin-conjugating enzyme]-L-cysteine + N(6)-ubiquitinyl-[acceptor protein]-L-lysine.. The protein operates within protein modification; protein ubiquitination. In terms of biological role, E3 ubiquitin ligase catalyzing the covalent attachment of ubiquitin moieties onto substrate proteins. Acts as a key developmental timer that helps ensure puberty begins at the appropriate age, by inhibiting premature activation of the reproductive hormone cascade. Epigenetically regulates GNRH1 transcription by disrupting the binding of methyl-DNA binding protein 3/MBD3 to the promoter of GNRH1. Mechanistically, mediates the non-proteolytic ubiquitination of MBD3 at multiple sites with 'Lys27' ubiquitin linkages and thereby regulates the methylation status of the genome, including GNRH1 promoter. Modulates the stability and translation of GNRH1 mRNA by mediating the non-proteolytic ubiquitination of PABP family members PABPC1, PABPC3 and PABPC4 at multiple sites. Also participates in the maintenance of genomic and epigenomic stability by regulating the abundance of APEX2 via 'Lys-48'-linked ubiquitination. The polypeptide is E3 ubiquitin-protein ligase makorin-3 (Mkrn3) (Mus musculus (Mouse)).